The primary structure comprises 1875 residues: Nonribosomal peptide synthetase otaB (1875 aa).

Residues 202-590 form an adenylation 1 region; the sequence is GQVRENGDRA…SIRFAGRRQA (389 aa). The Carrier domain occupies 724–800; sequence SPMTAAERVM…DLVAHIKDAG (77 aa). Serine 761 carries the O-(pantetheine 4'-phosphoryl)serine modification. The condensation stretch occupies residues 836-1245; the sequence is EDVYPCTTLQ…LVSPLDEERL (410 aa). The adenylation 2 stretch occupies residues 1264–1659; it reads QKQSYAQPQA…ARKDTQVKIR (396 aa).

The protein belongs to the NRP synthetase family.

The catalysed reaction is 7-carboxymellein + L-phenylalanine + ATP = ochratoxin B + ADP + phosphate + H(+). It participates in mycotoxin biosynthesis. Nonribosomal peptide synthetase; part of the gene cluster that mediates the biosynthesis of ochratoxin A (OTA), a mycotoxin composed of a chlorinated type I polyketide dihydroisocoumarin moiety linked to L-phenylalanine, and demonstrated to have nephrotoxic, immunotoxic, genotoxic, neurotoxic, and teratogenic properties. OtaB is responsible for the linking of phenylalanine to the dihydroisocoumarin ring. The pathway begins with the highly reducing polyketide synthase otaA that catalyzes the formation of the isocoumarin group during the initial stages of biosynthesis, starting from one acetate and 4 malonate units, to originate the characteristic pentaketide skeleton 7-methylmellein (7-MM) of the OTA molecule. The newly identified cyclase otaY might be involved in the polyketide cyclization reaction during the initial steps of the OTA biosynthesis. 7-MM is then oxidized into 7-carboxymellein (also called ochratoxin beta) by the cytochrome P450 monooxygenase otaC. The NRPS encoded by the otaB gene is involved in the linking of phenylalanine to the dihydroisocoumarin ring. The reaction catalyzed by NRPS results in the production of ochratoxin B (OTB), which is the non-chlorinated analog of OTA and which subsequently serves as the substrate of the halogenase otaD for chlorination activity to form the final molecular structure of OTA, containing a chlorine atom in the C-5 position of the molecule. The protein is Nonribosomal peptide synthetase otaB of Aspergillus carbonarius (strain ITEM 5010).